A 424-amino-acid polypeptide reads, in one-letter code: Serpin-Z2A (424 aa).

The RCL stretch occupies residues 370 to 394 (GTEAAASTACTIRLLSMSYPEDFVA).

The protein belongs to the serpin family.

Functionally, probable serine protease inhibitor. This chain is Serpin-Z2A, found in Oryza sativa subsp. japonica (Rice).